Here is a 1141-residue protein sequence, read N- to C-terminus: MINRDNKKAITKKGMISNRLNKFSIRKYTVGTASILVGTTLIFGLGNQEAKAAENTSTENAKQDDATTSDNKEVVSEAENNSTTENDSTNPIKKETNTDSQPEAKEESTKSSTQQQQNNVTATTETKPQNIEKENVKPSTDKTATEDTSVILEEKKAPNNTNNDVTTKPSTSEIQTKPTTPQESTNIENSQPQPTPSKVDNQVTDATNPKEPVNVSKEELKNNPEKLKELVRNDSNTDHSTKPVATAPTSVAPKRVNAKMRFAVAQPAAVASNNVNDLIKVTKQTIKVGDGKDNVAAAHDGKDIEYDTEFTIDNKVKKGDTMTINYDKNVIPSDLTDKNDPIDITDPSGEVIAKGTFDKATKQITYTFTDYVDKYEDIKSRLTLYSYIDKKTVPNETSLNLTFATAGKETSQNVTVDYQDPMVHGDSNIQSIFTKLDEDKQTIEQQIYVNPLKKSATNTKVDIAGSQVDDYGNIKLGNGSTIIDQNTEIKVYKVNSDQQLPQSNRIYDFSQYEDVTSQFDNKKSFSNNVATLDFGDINSAYIIKVVSKYTPTSDGELDIAQGTSMRTTDKYGYYNYAGYSNFIVTSNDSGGGDGTVKPEEKLYKIGDYVWEDVDKDGVQGTDSKEKPMANVLVTLTYPDGTTKSVRTDAKGHYEFGGLKDGETYTVKFETPTGYLPTKVNGTTDGEKDSNGSSVTVKINGKDDMSLDTGFYKEPKYNLGDYVWEDTNKDGIQDANEPGIKDVKVTLKDSTGKVIGTTTTDASGKYKFTDLDNGNYTVEFETPAGYTPTVKNTTAEDKDSNGLTTTGVIKDADNMTLDSGFYKTPKYSLGDYVWYDSNKDGKQDSTEKGIKDVTVTLQNEKGEVIGTTKTDENGKYRFDNLDSGKYKVIFEKPAGLTQTVTNTTEDDKDADGGEVDVTITDHDDFTLDNGYFEEDTSDSDSDSDSDSDSDSDSDSDSDSDSDSDSDSESDSDSDSDSDSDSDSDSDSDSDSDSDSDSDSDSDSDSDSDSDSDSDSDSDSDSDSDSDSDSDSDSDSDSDSDSDSDSDSDSDSDSDSDSDSDSDSDSDSDSDSDSDSDSDSDSDAGKHTPVKPMSTTKDHHNKAKALPETGSENNGSNNATLFGGLFAALGSLLLFGRRKKQNK.

Positions 1-52 (MINRDNKKAITKKGMISNRLNKFSIRKYTVGTASILVGTTLIFGLGNQEAKA) are cleaved as a signal peptide. Positions 23–34 (FSIRKYTVGTAS) match the YSIRK-G/S signaling motif motif. Residues 53–601 (AENTSTENAK…GDGTVKPEEK (549 aa)) are ligand binding A region. The tract at residues 54–225 (ENTSTENAKQ…SKEELKNNPE (172 aa)) is disordered. Basic and acidic residues predominate over residues 61 to 75 (AKQDDATTSDNKEVV). Over residues 77–90 (EAENNSTTENDSTN) the composition is skewed to low complexity. Positions 92–109 (IKKETNTDSQPEAKEEST) are enriched in basic and acidic residues. Over residues 110-126 (KSSTQQQQNNVTATTET) the composition is skewed to low complexity. Positions 130-145 (NIEKENVKPSTDKTAT) are enriched in basic and acidic residues. Residues 158-207 (PNNTNNDVTTKPSTSEIQTKPTTPQESTNIENSQPQPTPSKVDNQVTDAT) show a composition bias toward polar residues. A compositionally biased stretch (basic and acidic residues) spans 216-225 (SKEELKNNPE). 3 CNA-B domains span residues 602-714 (LYKI…YKEP), 715-824 (KYNL…YKTP), and 825-935 (KYSL…EEDT). The interval 899 to 1117 (VTNTTEDDKD…GSENNGSNNA (219 aa)) is disordered. 2 stretches are compositionally biased toward acidic residues: residues 903–913 (TEDDKDADGGE) and 930–1080 (YFEE…DSDS). Residues 1104–1108 (LPETG) carry the LPXTG sorting signal motif. Thr-1107 is modified (pentaglycyl murein peptidoglycan amidated threonine). The propeptide at 1108–1141 (GSENNGSNNATLFGGLFAALGSLLLFGRRKKQNK) is removed by sortase.

The protein belongs to the serine-aspartate repeat-containing protein (SDr) family. In terms of assembly, interacts with host complement factor H/CFAH (via C-terminus). Interacts with host complement regulator C4BPA.

It localises to the secreted. Its subcellular location is the cell wall. Its function is as follows. Cell surface-associated calcium-binding protein which plays an important role in adhesion and pathogenesis. Contributes to the resistance to killing by innate immune components in blood and thus attenuates bacterial clearance by interacting with host complement factor H/CFAH and modulating its activity. Also inhibits bacterial opsonization and killing by interacting with host complement regulator C4BPA and thus inhibiting classical complement pathway activation. This Staphylococcus aureus (strain MSSA476) protein is Serine-aspartate repeat-containing protein E (sdrE).